The chain runs to 307 residues: Junctional adhesion molecule 2A (307 aa).

A signal peptide spans Met-1–Pro-18. The 94-residue stretch at Val-19 to Ser-112 folds into the Ig-like V-type domain. The Extracellular segment spans residues Val-19–Ala-226. Cystine bridges form between Cys-40–Cys-102 and Cys-147–Cys-197. The region spanning Pro-126 to Ala-225 is the Ig-like C2-type domain. The chain crosses the membrane as a helical span at residues Val-227–Leu-247. The Cytoplasmic segment spans residues Ala-248–Leu-307. Residues Leu-278–Gly-288 show a composition bias toward polar residues. The disordered stretch occupies residues Leu-278–Leu-307. Positions Pro-292–His-301 are enriched in basic and acidic residues.

Belongs to the immunoglobulin superfamily.

Its subcellular location is the cell membrane. It is found in the cell junction. It localises to the tight junction. Its function is as follows. Junctional adhesion protein that mediates heterotypic cell-cell interactions to regulate different cellular processes. During myogenesis, it is involved in myocyte fusion through the binding of jam3b on neighboring myocytes. The chain is Junctional adhesion molecule 2A (jam2a) from Danio rerio (Zebrafish).